Here is a 304-residue protein sequence, read N- to C-terminus: Sulfate adenylyltransferase subunit 2 (304 aa).

It belongs to the PAPS reductase family. CysD subfamily. Heterodimer composed of CysD, the smaller subunit, and CysN.

It carries out the reaction sulfate + ATP + H(+) = adenosine 5'-phosphosulfate + diphosphate. It participates in sulfur metabolism; hydrogen sulfide biosynthesis; sulfite from sulfate: step 1/3. Its function is as follows. With CysN forms the ATP sulfurylase (ATPS) that catalyzes the adenylation of sulfate producing adenosine 5'-phosphosulfate (APS) and diphosphate, the first enzymatic step in sulfur assimilation pathway. APS synthesis involves the formation of a high-energy phosphoric-sulfuric acid anhydride bond driven by GTP hydrolysis by CysN coupled to ATP hydrolysis by CysD. The chain is Sulfate adenylyltransferase subunit 2 from Acinetobacter baylyi (strain ATCC 33305 / BD413 / ADP1).